A 510-amino-acid chain; its full sequence is ATP synthase subunit alpha (510 aa).

ATP is bound at residue 170 to 177; that stretch reads GDRQTGKT.

Belongs to the ATPase alpha/beta chains family. In terms of assembly, F-type ATPases have 2 components, CF(1) - the catalytic core - and CF(0) - the membrane proton channel. CF(1) has five subunits: alpha(3), beta(3), gamma(1), delta(1), epsilon(1). CF(0) has three main subunits: a(1), b(2) and c(9-12). The alpha and beta chains form an alternating ring which encloses part of the gamma chain. CF(1) is attached to CF(0) by a central stalk formed by the gamma and epsilon chains, while a peripheral stalk is formed by the delta and b chains.

The protein resides in the cell inner membrane. It carries out the reaction ATP + H2O + 4 H(+)(in) = ADP + phosphate + 5 H(+)(out). Its function is as follows. Produces ATP from ADP in the presence of a proton gradient across the membrane. The alpha chain is a regulatory subunit. The polypeptide is ATP synthase subunit alpha (Caulobacter sp. (strain K31)).